A 784-amino-acid chain; its full sequence is Cyclin-dependent kinase 11B (784 aa).

Positions 18 to 60 are enriched in basic and acidic residues; the sequence is QEKKRRKEQEEKAEIKRLKNSDDRDSKRDSLEEGELRDHRMEI. The tract at residues 18–401 is disordered; it reads QEKKRRKEQE…EGDYVPDSPA (384 aa). Residues Ser47 and Ser72 each carry the phosphoserine modification. Positions 95-113 are enriched in basic residues; it reads EKAHHRKDEKRKEKRRHRS. Composition is skewed to basic and acidic residues over residues 114 to 131, 138 to 227, and 238 to 263; these read HSAEGGKHARVKEKEREH, REEQ…DKGK, and PPRERFEMGDNRKPVKEEKVEERDLL. Ser115 is subject to Phosphoserine. Ser270 carries the post-translational modification Phosphoserine. A compositionally biased stretch (low complexity) spans 278–289; the sequence is SAESSSAESGSG. Acidic residues-rich tracts occupy residues 290–353 and 372–381; these read SEEE…EDRE and DSEEGEEEVG. A Protein kinase domain is found at 427-712; it reads FQCLNRIEEG…AEDGLKHEYF (286 aa). Residues 433–441 and Lys456 contribute to the ATP site; that span reads IEEGTYGVV. Ser471 carries the phosphoserine; by CDK7 modification. Thr477 bears the Phosphothreonine; by CDK7 mark. Asp551 functions as the Proton acceptor in the catalytic mechanism. At Ser578 the chain carries Phosphoserine. Tyr583 carries the post-translational modification Phosphotyrosine. Residue Thr584 is modified to Phosphothreonine. A Glycyl lysine isopeptide (Lys-Gly) (interchain with G-Cter in SUMO2) cross-link involves residue Lys630. A disordered region spans residues 722–784; that stretch reads SMFPTWPAKS…AAGPGFSLKF (63 aa). Thr740 carries the phosphothreonine modification. Ser741 bears the Phosphoserine mark.

It belongs to the protein kinase superfamily. CMGC Ser/Thr protein kinase family. CDC2/CDKX subfamily. In terms of assembly, may interact PAK1 and RANBP9. p110C interacts with RNPS1. Interacts with CCND3. Interacts with CCNL1 and CCNL2. Forms complexes with pre-mRNA-splicing factors, including at least SRSF1, SRSF2 AND SRSF7/SLU7. Requires Mg(2+) as cofactor. Post-translationally, phosphorylation at Ser-115 creates a binding site for 14-3-3 proteins.

The catalysed reaction is L-seryl-[protein] + ATP = O-phospho-L-seryl-[protein] + ADP + H(+). The enzyme catalyses L-threonyl-[protein] + ATP = O-phospho-L-threonyl-[protein] + ADP + H(+). Its activity is regulated as follows. Phosphorylation at Thr-437 or Tyr-438 inactivates the enzyme, while phosphorylation at Thr-584 activates it. Its function is as follows. Plays multiple roles in cell cycle progression, cytokinesis and apoptosis. Involved in pre-mRNA splicing in a kinase activity-dependent manner. May act as a negative regulator of normal cell cycle progression. The chain is Cyclin-dependent kinase 11B (Cdk11b) from Mus musculus (Mouse).